A 314-amino-acid polypeptide reads, in one-letter code: L-lactate dehydrogenase 2 (314 aa).

Residues valine 16, aspartate 37, lysine 42, tyrosine 68, and glycine 82–leucine 83 each bind NAD(+). Residues glutamine 85, arginine 91, and asparagine 123 to aspartate 126 each bind substrate. NAD(+)-binding positions include alanine 121–asparagine 123 and serine 146. A substrate-binding site is contributed by aspartate 151–arginine 154. Arginine 156 and histidine 171 together coordinate beta-D-fructose 1,6-bisphosphate. Catalysis depends on histidine 178, which acts as the Proton acceptor. The residue at position 223 (tyrosine 223) is a Phosphotyrosine. Residue threonine 232 coordinates substrate.

It belongs to the LDH/MDH superfamily. LDH family. As to quaternary structure, homotetramer.

The protein localises to the cytoplasm. It catalyses the reaction (S)-lactate + NAD(+) = pyruvate + NADH + H(+). The protein operates within fermentation; pyruvate fermentation to lactate; (S)-lactate from pyruvate: step 1/1. Its activity is regulated as follows. Allosterically activated by fructose 1,6-bisphosphate (FBP). Catalyzes the conversion of lactate to pyruvate. In Bacillus cereus (strain ATCC 10987 / NRS 248), this protein is L-lactate dehydrogenase 2.